Consider the following 94-residue polypeptide: Putative regulatory protein Sfum_3631 (94 aa).

The protein belongs to the RemA family.

This chain is Putative regulatory protein Sfum_3631, found in Syntrophobacter fumaroxidans (strain DSM 10017 / MPOB).